An 84-amino-acid chain; its full sequence is Small ribosomal subunit protein bS16 (84 aa).

This sequence belongs to the bacterial ribosomal protein bS16 family.

The polypeptide is Small ribosomal subunit protein bS16 (Koribacter versatilis (strain Ellin345)).